Here is a 421-residue protein sequence, read N- to C-terminus: Leucine-rich repeat-containing protein 42 (421 aa).

LRR repeat units lie at residues 149–170 (VLCS…EEIK), 174–195 (ELTR…LEHL), 202–222 (SVTQ…RKMT), 234–255 (NLAL…GYLF), and 259–280 (KLNC…KDKL). The disordered stretch occupies residues 376-406 (PLLSQESKKSKKRAFKESEQEQSSPQSAKQK). A compositionally biased stretch (low complexity) spans 396–406 (EQSSPQSAKQK). The residue at position 399 (serine 399) is a Phosphoserine.

Belongs to the LRRC42 family.

In Mus musculus (Mouse), this protein is Leucine-rich repeat-containing protein 42 (Lrrc42).